Here is a 93-residue protein sequence, read N- to C-terminus: Small ribosomal subunit protein uS19 (93 aa).

It belongs to the universal ribosomal protein uS19 family.

In terms of biological role, protein S19 forms a complex with S13 that binds strongly to the 16S ribosomal RNA. The chain is Small ribosomal subunit protein uS19 (rpsS) from Thermus thermophilus (strain ATCC BAA-163 / DSM 7039 / HB27).